Consider the following 367-residue polypeptide: Phosphoribosylaminoimidazole-succinocarboxamide synthase (367 aa).

This sequence belongs to the SAICAR synthetase family.

It carries out the reaction 5-amino-1-(5-phospho-D-ribosyl)imidazole-4-carboxylate + L-aspartate + ATP = (2S)-2-[5-amino-1-(5-phospho-beta-D-ribosyl)imidazole-4-carboxamido]succinate + ADP + phosphate + 2 H(+). The protein operates within purine metabolism; IMP biosynthesis via de novo pathway; 5-amino-1-(5-phospho-D-ribosyl)imidazole-4-carboxamide from 5-amino-1-(5-phospho-D-ribosyl)imidazole-4-carboxylate: step 1/2. This is Phosphoribosylaminoimidazole-succinocarboxamide synthase from Aliivibrio fischeri (strain MJ11) (Vibrio fischeri).